A 360-amino-acid polypeptide reads, in one-letter code: Peptide chain release factor 1 (360 aa).

Glutamine 236 carries the post-translational modification N5-methylglutamine.

Belongs to the prokaryotic/mitochondrial release factor family. In terms of processing, methylated by PrmC. Methylation increases the termination efficiency of RF1.

It localises to the cytoplasm. In terms of biological role, peptide chain release factor 1 directs the termination of translation in response to the peptide chain termination codons UAG and UAA. This chain is Peptide chain release factor 1, found in Lactiplantibacillus plantarum (strain ATCC BAA-793 / NCIMB 8826 / WCFS1) (Lactobacillus plantarum).